The following is a 109-amino-acid chain: RNA-binding protein Hfq (109 aa).

Residues aspartate 9–valine 68 enclose the Sm domain. Residues proline 77–glutamate 109 are disordered.

The protein belongs to the Hfq family. Homohexamer.

Functionally, RNA chaperone that binds small regulatory RNA (sRNAs) and mRNAs to facilitate mRNA translational regulation in response to envelope stress, environmental stress and changes in metabolite concentrations. Also binds with high specificity to tRNAs. This chain is RNA-binding protein Hfq, found in Francisella tularensis subsp. holarctica (strain FTNF002-00 / FTA).